The following is a 320-amino-acid chain: Foldase protein PrsA (320 aa).

The signal sequence occupies residues 1-20; that stretch reads MKMINKLIVPVTASALLLGA. C21 carries N-palmitoyl cysteine lipidation. C21 carries S-diacylglycerol cysteine lipidation. Residues 139–245 enclose the PpiC domain; that stretch reads EDSKKASHIL…FGYHIIKADK (107 aa). The interval 159 to 198 is disordered; the sequence is EGLDDKEAKQKAEEIQKEVSKDPSKFGEIAKKESMDTGSA.

The protein belongs to the PrsA family.

Its subcellular location is the cell membrane. The enzyme catalyses [protein]-peptidylproline (omega=180) = [protein]-peptidylproline (omega=0). In terms of biological role, plays a major role in protein secretion by helping the post-translocational extracellular folding of several secreted proteins. The chain is Foldase protein PrsA from Staphylococcus aureus (strain MRSA252).